A 321-amino-acid chain; its full sequence is LIMR family protein SELMODRAFT_432210 (321 aa).

5 helical membrane passes run 28–48 (KQLW…VIPF), 116–133 (CFSL…LDLW), 139–159 (LCVF…FGGV), 240–260 (LVFG…ILVF), and 284–304 (LLGT…VISG).

It belongs to the LIMR family.

Its subcellular location is the membrane. The chain is LIMR family protein SELMODRAFT_432210 from Selaginella moellendorffii (Spikemoss).